Here is a 611-residue protein sequence, read N- to C-terminus: Chaperone protein DnaK (611 aa).

A Phosphothreonine; by autocatalysis modification is found at threonine 173. Low complexity predominate over residues 579–592 (AAGQAEGAQGAQDA). Positions 579–598 (AAGQAEGAQGAQDAGAKKDN) are disordered.

The protein belongs to the heat shock protein 70 family.

In terms of biological role, acts as a chaperone. In Bacillus cereus (strain ATCC 10987 / NRS 248), this protein is Chaperone protein DnaK.